The following is a 378-amino-acid chain: Response regulator aspartate phosphatase A (378 aa).

TPR repeat units follow at residues Tyr101 to Asp137, Ala148 to Arg181, Gln183 to Glu215, Ser222 to Glu255, Pro261 to Tyr294, and Glu336 to Ile369.

It belongs to the Rap family. In terms of assembly, homodimer. Interacts with its substrate, phosphorylated Spo0F, and its inhibitor, the PhrA pentapeptide. The RapA dimer forms a stable complex with two molecules of phosphorylated Spo0F. The complex is dissociated after dephosphorylation of Spo0F by RapA. The cofactor is Mn(2+).

It is found in the cytoplasm. Its activity is regulated as follows. Phosphatase activity is inhibited by the phosphatase regulator PhrA. Interaction with PhrA dissociates the RapA-Spo0F complex. Activity is abolished in the presence of EDTA. In terms of biological role, involved in the regulation of sporulation. Acts as a phosphatase that specifically dephosphorylates the sporulation initiation phosphotransferase Spo0F and inhibits its activity. The sequence is that of Response regulator aspartate phosphatase A from Bacillus subtilis (strain 168).